The primary structure comprises 358 residues: Alanine racemase (358 aa).

The active-site Proton acceptor; specific for D-alanine is Lys35. N6-(pyridoxal phosphate)lysine is present on Lys35. Substrate is bound at residue Arg131. Tyr253 functions as the Proton acceptor; specific for L-alanine in the catalytic mechanism. Residue Met301 participates in substrate binding.

This sequence belongs to the alanine racemase family. Pyridoxal 5'-phosphate serves as cofactor.

The enzyme catalyses L-alanine = D-alanine. The protein operates within amino-acid biosynthesis; D-alanine biosynthesis; D-alanine from L-alanine: step 1/1. Its function is as follows. Catalyzes the interconversion of L-alanine and D-alanine. May also act on other amino acids. This is Alanine racemase (alr) from Alteromonas mediterranea (strain DSM 17117 / CIP 110805 / LMG 28347 / Deep ecotype).